A 35-amino-acid polypeptide reads, in one-letter code: Unknown protein 14 from 2D-PAGE (35 aa).

The interval 1-35 (VVXXQTLXDXRGIYGDQGSIGPXXIXGLQGDRDAD) is disordered.

The sequence is that of Unknown protein 14 from 2D-PAGE from Bombyx mori (Silk moth).